The primary structure comprises 548 residues: Probable 5-epi-aristolochene synthase 4 (548 aa).

Residues Asp-301, Asp-305, Asp-444, Thr-448, and Glu-452 each contribute to the Mg(2+) site. The short motif at 301 to 305 (DDTFD) is the DDXXD motif element.

It belongs to the terpene synthase family. As to quaternary structure, monomer. Mg(2+) is required as a cofactor.

It localises to the cytoplasm. It catalyses the reaction (2E,6E)-farnesyl diphosphate = (+)-5-epi-aristolochene + diphosphate. It functions in the pathway secondary metabolite biosynthesis; terpenoid biosynthesis. Catalyzes the cyclization of trans,trans-farnesyl diphosphate (FPP) to the bicyclic intermediate 5-epi-aristolochene, initial step in the conversion of FPP to the sesquiterpenoid antifungal phytoalexin capsidiol. Produces germacrene A as an enzyme-bound intermediate that is not released by the enzyme, but is further cyclized to produce the bicyclic 5-epi-aristolochene. In Nicotiana attenuata (Coyote tobacco), this protein is Probable 5-epi-aristolochene synthase 4.